We begin with the raw amino-acid sequence, 187 residues long: Ribonuclease HII (187 aa).

The 187-residue stretch at 1–187 (MIILGIDEAG…YKPVQVLLNE (187 aa)) folds into the RNase H type-2 domain. Residues Asp-7, Glu-8, and Asp-99 each contribute to the a divalent metal cation site.

This sequence belongs to the RNase HII family. Requires Mn(2+) as cofactor. The cofactor is Mg(2+).

The protein localises to the cytoplasm. It catalyses the reaction Endonucleolytic cleavage to 5'-phosphomonoester.. Its function is as follows. Endonuclease that specifically degrades the RNA of RNA-DNA hybrids. The polypeptide is Ribonuclease HII (Francisella tularensis subsp. tularensis (strain FSC 198)).